The chain runs to 437 residues: Serine--tRNA ligase (437 aa).

227-229 (TAE) serves as a coordination point for L-serine. Residues 258 to 260 (RSE) and valine 274 contribute to the ATP site. Glutamate 281 is an L-serine binding site. Residue 347–350 (ETHS) coordinates ATP. Residue threonine 382 participates in L-serine binding.

This sequence belongs to the class-II aminoacyl-tRNA synthetase family. Type-1 seryl-tRNA synthetase subfamily. In terms of assembly, homodimer. The tRNA molecule binds across the dimer.

It is found in the cytoplasm. It catalyses the reaction tRNA(Ser) + L-serine + ATP = L-seryl-tRNA(Ser) + AMP + diphosphate + H(+). It carries out the reaction tRNA(Sec) + L-serine + ATP = L-seryl-tRNA(Sec) + AMP + diphosphate + H(+). It functions in the pathway aminoacyl-tRNA biosynthesis; selenocysteinyl-tRNA(Sec) biosynthesis; L-seryl-tRNA(Sec) from L-serine and tRNA(Sec): step 1/1. Catalyzes the attachment of serine to tRNA(Ser). Is also able to aminoacylate tRNA(Sec) with serine, to form the misacylated tRNA L-seryl-tRNA(Sec), which will be further converted into selenocysteinyl-tRNA(Sec). The sequence is that of Serine--tRNA ligase from Deinococcus geothermalis (strain DSM 11300 / CIP 105573 / AG-3a).